Here is a 488-residue protein sequence, read N- to C-terminus: Probable malate:quinone oxidoreductase (488 aa).

Belongs to the MQO family. The cofactor is FAD.

It carries out the reaction (S)-malate + a quinone = a quinol + oxaloacetate. The protein operates within carbohydrate metabolism; tricarboxylic acid cycle; oxaloacetate from (S)-malate (quinone route): step 1/1. The polypeptide is Probable malate:quinone oxidoreductase (Neisseria meningitidis serogroup A / serotype 4A (strain DSM 15465 / Z2491)).